Consider the following 146-residue polypeptide: Hemoglobin subunit beta (146 aa).

One can recognise a Globin domain in the interval 2–146; the sequence is HWSAEEKQLI…VAHSLARVYH (145 aa). Residues His-63 and His-92 each contribute to the heme b site.

This sequence belongs to the globin family. As to quaternary structure, heterotetramer of two alpha chains and two beta chains. Red blood cells.

Involved in oxygen transport from the lung to the various peripheral tissues. The chain is Hemoglobin subunit beta (HBB) from Microcephalophis gracilis (Graceful small-headed sea snake).